Reading from the N-terminus, the 759-residue chain is LPS-assembly protein LptD (759 aa).

The signal sequence occupies residues 1-45; it reads MKPLKLELNPRDFNHYQAAFLPYRMKIKQPLHVLCFSVCSLSAVA.

It belongs to the LptD family. In terms of assembly, component of the lipopolysaccharide transport and assembly complex. Interacts with LptE and LptA.

The protein resides in the cell outer membrane. Functionally, together with LptE, is involved in the assembly of lipopolysaccharide (LPS) at the surface of the outer membrane. The sequence is that of LPS-assembly protein LptD from Pseudoalteromonas atlantica (strain T6c / ATCC BAA-1087).